The primary structure comprises 221 residues: UPF0502 protein PA14_19450 (221 aa).

Belongs to the UPF0502 family.

This is UPF0502 protein PA14_19450 from Pseudomonas aeruginosa (strain UCBPP-PA14).